Here is a 137-residue protein sequence, read N- to C-terminus: Small ribosomal subunit protein uS12 (137 aa).

At Asp-102 the chain carries 3-methylthioaspartic acid.

The protein belongs to the universal ribosomal protein uS12 family. As to quaternary structure, part of the 30S ribosomal subunit. Contacts proteins S8 and S17. May interact with IF1 in the 30S initiation complex.

In terms of biological role, with S4 and S5 plays an important role in translational accuracy. Interacts with and stabilizes bases of the 16S rRNA that are involved in tRNA selection in the A site and with the mRNA backbone. Located at the interface of the 30S and 50S subunits, it traverses the body of the 30S subunit contacting proteins on the other side and probably holding the rRNA structure together. The combined cluster of proteins S8, S12 and S17 appears to hold together the shoulder and platform of the 30S subunit. This Mesoplasma florum (strain ATCC 33453 / NBRC 100688 / NCTC 11704 / L1) (Acholeplasma florum) protein is Small ribosomal subunit protein uS12.